A 286-amino-acid chain; its full sequence is Lipid phosphate phosphatase epsilon 2, chloroplastic (286 aa).

A chloroplast-targeting transit peptide spans 1-60; sequence MAASSSSLLLLHKPTYNFHFAASSVPTYINSARFRISSSIFPLDRRRRRRIWSVSGFKSM. 5 helical membrane passes run 133 to 149, 173 to 193, 194 to 214, 226 to 246, and 260 to 280; these read LWAV…SVAL, AQSI…WLGT, NVLS…FTWL, VVVG…TWNS, and IALF…VLLN.

It belongs to the PA-phosphatase related phosphoesterase family. As to expression, expressed in root tips, root branch points, cotyledons and leaves.

It localises to the plastid. The protein localises to the chloroplast inner membrane. Inhibited by Mg(2+). Functionally, exhibits phosphatidate phosphatase (PAP) activity in vitro. May play a secondary role as PAP in plastids. The sequence is that of Lipid phosphate phosphatase epsilon 2, chloroplastic (LPPE2) from Arabidopsis thaliana (Mouse-ear cress).